The chain runs to 312 residues: Malate dehydrogenase (312 aa).

Residues 7-13 (GAAGGIG) and Asp-34 each bind NAD(+). Arg-81 and Arg-87 together coordinate substrate. NAD(+) is bound by residues Asn-94 and 117–119 (ITN). Residues Asn-119 and Arg-153 each contribute to the substrate site. The Proton acceptor role is filled by His-177. Met-227 is a binding site for NAD(+).

This sequence belongs to the LDH/MDH superfamily. MDH type 1 family. In terms of assembly, homodimer.

The enzyme catalyses (S)-malate + NAD(+) = oxaloacetate + NADH + H(+). In terms of biological role, catalyzes the reversible oxidation of malate to oxaloacetate. The sequence is that of Malate dehydrogenase from Pectobacterium carotovorum subsp. carotovorum (strain PC1).